The primary structure comprises 763 residues: Xaa-Pro dipeptidyl-peptidase (763 aa).

Residues Ser-348, Asp-468, and His-498 each act as charge relay system in the active site.

The protein belongs to the peptidase S15 family. In terms of assembly, homodimer.

The protein localises to the cytoplasm. It carries out the reaction Hydrolyzes Xaa-Pro-|- bonds to release unblocked, N-terminal dipeptides from substrates including Ala-Pro-|-p-nitroanilide and (sequentially) Tyr-Pro-|-Phe-Pro-|-Gly-Pro-|-Ile.. Functionally, removes N-terminal dipeptides sequentially from polypeptides having unsubstituted N-termini provided that the penultimate residue is proline. The sequence is that of Xaa-Pro dipeptidyl-peptidase (pepX) from Lactococcus lactis subsp. lactis (strain IL1403) (Streptococcus lactis).